The chain runs to 173 residues: Shikimate kinase (173 aa).

Residue 16-21 coordinates ATP; sequence GSGKTT. Thr20 is a Mg(2+) binding site. 3 residues coordinate substrate: Asp38, Arg62, and Gly83. Position 120 (Arg120) interacts with ATP. Arg139 serves as a coordination point for substrate. Arg156 contributes to the ATP binding site.

This sequence belongs to the shikimate kinase family. In terms of assembly, monomer. Requires Mg(2+) as cofactor.

The protein localises to the cytoplasm. The enzyme catalyses shikimate + ATP = 3-phosphoshikimate + ADP + H(+). It participates in metabolic intermediate biosynthesis; chorismate biosynthesis; chorismate from D-erythrose 4-phosphate and phosphoenolpyruvate: step 5/7. Catalyzes the specific phosphorylation of the 3-hydroxyl group of shikimic acid using ATP as a cosubstrate. The chain is Shikimate kinase from Corynebacterium diphtheriae (strain ATCC 700971 / NCTC 13129 / Biotype gravis).